The following is a 282-amino-acid chain: Bis(5'-nucleosyl)-tetraphosphatase, symmetrical (282 aa).

It belongs to the Ap4A hydrolase family.

It catalyses the reaction P(1),P(4)-bis(5'-adenosyl) tetraphosphate + H2O = 2 ADP + 2 H(+). In terms of biological role, hydrolyzes diadenosine 5',5'''-P1,P4-tetraphosphate to yield ADP. The protein is Bis(5'-nucleosyl)-tetraphosphatase, symmetrical of Burkholderia pseudomallei (strain 668).